Here is a 185-residue protein sequence, read N- to C-terminus: dTTP/UTP pyrophosphatase (185 aa).

Aspartate 67 (proton acceptor) is an active-site residue.

This sequence belongs to the Maf family. YhdE subfamily. It depends on a divalent metal cation as a cofactor.

Its subcellular location is the cytoplasm. The catalysed reaction is dTTP + H2O = dTMP + diphosphate + H(+). It catalyses the reaction UTP + H2O = UMP + diphosphate + H(+). Nucleoside triphosphate pyrophosphatase that hydrolyzes dTTP and UTP. May have a dual role in cell division arrest and in preventing the incorporation of modified nucleotides into cellular nucleic acids. The chain is dTTP/UTP pyrophosphatase from Lacticaseibacillus casei (strain BL23) (Lactobacillus casei).